Consider the following 20-residue polypeptide: Haemoporin (20 aa).

Positions 1–20 are disordered; it reads AAVPEAAAEATAEAAPVSEF.

In terms of assembly, homopentamer. Forms a cylindrical structure with a central pore. As to expression, detected in the hemolymph.

The protein resides in the secreted. This chain is Haemoporin, found in Aplysia californica (California sea hare).